Here is a 190-residue protein sequence, read N- to C-terminus: E3 ubiquitin-protein ligase RNF183 (190 aa).

Topologically, residues 1-159 (MSEPQGQELR…RECVRNPHFR (159 aa)) are cytoplasmic. The segment at 13–60 (CPVCWNPFNNTFHTPKVLDCCHSFCVECLAHLSLVTPARRRLLCPLCR) adopts an RING-type zinc-finger fold. The helical; Anchor for type IV membrane protein transmembrane segment at 160–180 (IFAYLMAVILSVTLLLIFSIF) threads the bilayer. At 181–190 (WTKQFFWGMG) the chain is on the lumenal side.

In terms of assembly, interacts with FATE1. Interacts with SEC16A. Interacts with BCL2L1. Autoubiquitinated (in vitro). In terms of tissue distribution, highly expressed in the kidney and testis.

Its subcellular location is the endoplasmic reticulum membrane. It localises to the endoplasmic reticulum. The protein localises to the golgi apparatus. The protein resides in the cis-Golgi network membrane. It is found in the lysosome membrane. It carries out the reaction S-ubiquitinyl-[E2 ubiquitin-conjugating enzyme]-L-cysteine + [acceptor protein]-L-lysine = [E2 ubiquitin-conjugating enzyme]-L-cysteine + N(6)-ubiquitinyl-[acceptor protein]-L-lysine.. Its pathway is protein modification; protein ubiquitination. Functionally, acts as an E3 ubiquitin ligase catalyzing the covalent attachment of ubiquitin moieties onto substrate proteins. Triggers apoptosis in response to prolonged ER stress by mediating the polyubiquitination and subsequent proteasomal degradation of BCL2L1. May collaborate with FATE1 to restrain BIK protein levels thus regulating apoptotic signaling. This is E3 ubiquitin-protein ligase RNF183 (Rnf183) from Mus musculus (Mouse).